Reading from the N-terminus, the 349-residue chain is GDSL esterase/lipase At2g19060 (349 aa).

The N-terminal stretch at 1 to 25 (MADKMFKALLWAFATAVVMAEAVRG) is a signal peptide. Ser37 serves as the catalytic Nucleophile. A glycan (N-linked (GlcNAc...) asparagine) is linked at Asn178. Active-site residues include Asp317 and His320.

It belongs to the 'GDSL' lipolytic enzyme family.

It is found in the secreted. The polypeptide is GDSL esterase/lipase At2g19060 (Arabidopsis thaliana (Mouse-ear cress)).